The chain runs to 448 residues: Gametocyte surface protein P45/48 (448 aa).

The N-terminal stretch at 1-27 (MMLYISAKKAQVAFILYIVLVLRIISG) is a signal peptide. One can recognise a 6-Cys 1 domain in the interval 45–182 (IGYKCNFSNE…AMVHVRVLKY (138 aa)). 2 disulfides stabilise this stretch: Cys-49/Cys-71 and Cys-102/Cys-156. N-linked (GlcNAc...) asparagine glycosylation is found at Asn-50, Asn-131, Asn-190, Asn-204, Asn-254, Asn-299, and Asn-303. The 6-Cys 2 domain occupies 294 to 426 (VIHGCNFSSN…KSAYMTVTID (133 aa)). 3 disulfide bridges follow: Cys-298-Cys-327, Cys-344-Cys-412, and Cys-352-Cys-410. Asp-426 carries the GPI-anchor amidated aspartate lipid modification. A propeptide spans 427–448 (SAYYGFLAKTFIFLIVAILLYI) (removed in mature form).

As to quaternary structure, heterodimer; heterodimerizes with PF230.

It is found in the cell surface. The protein resides in the cell membrane. Its function is as follows. Gametocyte surface protein required for male fertility. The protein is Gametocyte surface protein P45/48 (PF45/48) of Plasmodium falciparum (isolate 3D7).